A 121-amino-acid chain; its full sequence is MDSNTVSSFQDILMRMSKMQLGPSSGDLNGMITQFESLKLYRDSLGEAVMRMGDLHSLQIRNGKWREQLSQKFEEIRWLIEEVRHRLKITENSFEQITFMQALQLLLEVEQEIRTFSFQLI.

2 short sequence motifs (nuclear export signal) span residues Ile-12 to Leu-21 and His-85 to Phe-94.

This sequence belongs to the influenza viruses NEP family. As to quaternary structure, interacts with protein M1. May interact with host nucleoporin RAB/HRB and exportin XPO1/CRM1.

The protein resides in the virion. It localises to the host nucleus. Its function is as follows. Mediates the nuclear export of encapsidated genomic RNAs (ribonucleoproteins, RNPs). Acts as an adapter between viral RNPs complexes and the nuclear export machinery of the cell. Possesses no intrinsic RNA-binding activity, but includes a C-terminal M1-binding domain. This domain is believed to allow recognition of RNPs bound to the protein M1. Since protein M1 is not available in large quantities before late stages of infection, such an indirect recognition mechanism probably ensures that genomic RNPs are not exported from the host nucleus until sufficient quantities of viral mRNA and progeny genomic RNA have been synthesized. Furthermore, the RNPs enter the host cytoplasm only when associated with the M1 protein that is necessary to guide them to the plasma membrane. May down-regulate viral RNA synthesis when overproduced. This is Nuclear export protein from Influenza A virus (strain A/Chicken/Hong Kong/YU562/2001 H5N1 genotype B).